The following is a 155-amino-acid chain: FHA domain-containing protein FhaB (155 aa).

Residues 6–28 form a helical membrane-spanning segment; that stretch reads LQLTRAGFLMLLWVFIWSVLRIL. A Phosphothreonine modification is found at threonine 36. The FHA domain occupies 83-132; sequence VLIGRADDSTLVLTDDYASTRHARLSMRGSEWYVEDLGSTNGTYLDRAKV.

In terms of processing, phosphorylated by PknB. Dephosphorylated by PstP.

The protein localises to the cell membrane. This Mycobacterium tuberculosis (strain CDC 1551 / Oshkosh) protein is FHA domain-containing protein FhaB (fhaB).